The sequence spans 411 residues: Peptidyl-prolyl cis-trans isomerase (411 aa).

An N-acetylserine modification is found at S2. 2 disordered regions span residues 54 to 127 and 160 to 302; these read IIKR…TLSP and NYVK…PKSK. Residues 61-87 are compositionally biased toward acidic residues; the sequence is FEDDDFLGGDFDEDEIDEESSEEEEEE. Phosphoserine is present on residues S80 and S81. Position 89 is a phosphothreonine (T89). Composition is skewed to acidic residues over residues 103–118 and 173–242; these read ESEDDEEDDDEDDEFQ and EGED…EEQK. Y184 bears the Phosphotyrosine; by CK2 mark. Position 186 is a phosphoserine; by CK2 (S186). The segment covering 251 to 260 has biased composition (basic residues); sequence KSKKEKKRKH. A Nuclear localization signal motif is present at residues 256-271; it reads KKRKHEEKEEEKKAKK. Over residues 261 to 296 the composition is skewed to basic and acidic residues; that stretch reads EEKEEEKKAKKVKKVEFKKDLEEGPTKPKSKKEQDK. Positions 324–411 constitute a PPIase FKBP-type domain; it reads GARVGMRYIG…FDVKLVSMKN (88 aa).

It belongs to the FKBP-type PPIase family. FKBP3/4 subfamily. As to quaternary structure, interacts with NOP53. Post-translationally, phosphorylated at tyrosine and dephosphorylated by the phosphotyrosine-specific phosphoprotein phosphatase PTP1.

Its subcellular location is the nucleus. The protein resides in the nucleolus. It catalyses the reaction [protein]-peptidylproline (omega=180) = [protein]-peptidylproline (omega=0). Its activity is regulated as follows. Inhibited by both FK506 and rapamycin. Proline isomerase that belongs to an abundant class of enzymes that catalyze the cis-trans isomerization of X-Pro peptide bonds and can accelerate the refolding of proline-containing polypeptides. Specifically binds nuclear localization sequences. May be involved in the assembly or folding of ribosomal proteins. The sequence is that of Peptidyl-prolyl cis-trans isomerase from Saccharomyces cerevisiae (strain ATCC 204508 / S288c) (Baker's yeast).